The chain runs to 296 residues: Ribose import binding protein RbsB (296 aa).

An N-terminal signal peptide occupies residues 1 to 25 (MNMKKLATLVSAVALSATVSANAMA).

It belongs to the bacterial solute-binding protein 2 family. The complex is composed of an ATP-binding protein (RbsA), two transmembrane proteins (RbsC) and a solute-binding protein (RbsB).

Its subcellular location is the periplasm. Its function is as follows. Part of the ABC transporter complex RbsABC involved in ribose import. Binds ribose. Also serves as the primary chemoreceptor for chemotaxis. The protein is Ribose import binding protein RbsB of Escherichia coli (strain K12).